The following is a 539-amino-acid chain: Transcription factor LG2 (539 aa).

Over residues M115–N125 the composition is skewed to polar residues. Disordered regions lie at residues M115–N140 and K181–L246. Low complexity-rich tracts occupy residues S126–S137 and Q192–L205. The span at T219 to R242 shows a compositional bias: basic and acidic residues. One can recognise a bZIP domain in the interval D227 to R271. A basic motif region spans residues K229–K249. Positions L255–L269 are leucine-zipper. Residues A292–R506 form the DOG1 domain. The segment at G513–F539 is disordered.

Belongs to the bZIP family. In terms of assembly, interacts with NPR1/NH1 and NPR3/NH3.

It is found in the nucleus. Transcriptional regulator involved in defense response. Acts as a transcriptional activator in vitro. This chain is Transcription factor LG2, found in Oryza sativa subsp. japonica (Rice).